Here is an 87-residue protein sequence, read N- to C-terminus: MKNLDKGTVIRTVLLFVALVNQTLIMFGKSRLPISEDQVNTLADALYLAGSTIFTIVTTLVAWFKNNYVTSKGKLQKETLKQKGLTK.

The helical transmembrane segment at 44 to 64 threads the bilayer; the sequence is DALYLAGSTIFTIVTTLVAWF.

It belongs to the SPP1 holin family.

Its subcellular location is the membrane. This is an uncharacterized protein from Bacillus licheniformis.